Consider the following 992-residue polypeptide: Aminopeptidase Q (992 aa).

Topologically, residues G2–R13 are cytoplasmic. The helical; Signal-anchor for type II membrane protein transmembrane segment at A14–A34 threads the bilayer. Topologically, residues A35–T992 are extracellular. A disordered region spans residues L48–G92. N133 carries N-linked (GlcNAc...) asparagine glycosylation. Residue E241 coordinates substrate. N262, N289, N347, and N361 each carry an N-linked (GlcNAc...) asparagine glycan. S380 to N384 provides a ligand contact to substrate. H416 is a Zn(2+) binding site. The active-site Proton acceptor is the E417. Residues H420 and E439 each coordinate Zn(2+). A glycan (N-linked (GlcNAc...) asparagine) is linked at N489. The active-site Proton donor is the Y505. Residues N584, N602, N609, N655, N811, N850, and N889 are each glycosylated (N-linked (GlcNAc...) asparagine).

It belongs to the peptidase M1 family. The cofactor is Zn(2+). As to expression, expressed in skin. Expression levels do not differ between dark and light skin areas.

The protein resides in the membrane. Metalloprotease which may be important for placentation by regulating biological activity of key peptides at the embryo-maternal interface. Involved in coat pigmentation patterns. During skin development, may be required to establish the periodicity of tabby markings, initiating a pre-pattern at or before hair follicle development. This is Aminopeptidase Q (LVRN) from Acinonyx jubatus (Cheetah).